The sequence spans 290 residues: Nucleotide-binding protein XF_1405 (290 aa).

Residue 13 to 20 participates in ATP binding; sequence GLSGSGKS. 65–68 lines the GTP pocket; it reads DIRS.

The protein belongs to the RapZ-like family.

Functionally, displays ATPase and GTPase activities. The sequence is that of Nucleotide-binding protein XF_1405 from Xylella fastidiosa (strain 9a5c).